Consider the following 372-residue polypeptide: Pluviatolide O-methyltransferase (372 aa).

The S-adenosyl-L-homocysteine site is built by Gly214, Asp237, Asp257, Met258, and Lys271. The Proton acceptor role is filled by His275. Residues Asp306 and Glu338 contribute to the active site.

Belongs to the class I-like SAM-binding methyltransferase superfamily. Cation-independent O-methyltransferase family. COMT subfamily. Homodimer. In terms of tissue distribution, mostly expressed in stems, and, to a lower extent, in leaves.

The enzyme catalyses (-)-pluviatolide + S-adenosyl-L-methionine = (-)-bursehernin + S-adenosyl-L-homocysteine + H(+). It participates in aromatic compound metabolism; phenylpropanoid biosynthesis. O-methyltransferase involved in the biosynthesis of etoposide, a chemotherapeutic compound of the topoisomerase inhibitor family. Catalyzes the methylation of (-)-pluviatolide to produce (-)-bursehernin. The polypeptide is Pluviatolide O-methyltransferase (Sinopodophyllum hexandrum (Himalayan may apple)).